The primary structure comprises 408 residues: Argininosuccinate synthase (408 aa).

ATP is bound by residues 11–19 (AYSGGLDTS) and Ala-38. L-citrulline is bound by residues Tyr-91 and Ser-96. Residue Gly-121 coordinates ATP. 3 residues coordinate L-aspartate: Thr-123, Asn-127, and Asp-128. Asn-127 contributes to the L-citrulline binding site. L-citrulline-binding residues include Arg-131, Ser-182, Ser-191, Glu-267, and Tyr-279.

The protein belongs to the argininosuccinate synthase family. Type 1 subfamily. Homotetramer.

Its subcellular location is the cytoplasm. It catalyses the reaction L-citrulline + L-aspartate + ATP = 2-(N(omega)-L-arginino)succinate + AMP + diphosphate + H(+). The protein operates within amino-acid biosynthesis; L-arginine biosynthesis; L-arginine from L-ornithine and carbamoyl phosphate: step 2/3. In Zymomonas mobilis subsp. mobilis (strain ATCC 31821 / ZM4 / CP4), this protein is Argininosuccinate synthase.